A 354-amino-acid chain; its full sequence is Ephrin-4 (354 aa).

Residues 1–22 form the signal peptide; sequence MKRPLDFLLAICLILLRSSTFA. The 151-residue stretch at 23 to 173 folds into the Ephrin RBD domain; that stretch reads DEHTVHWNST…SKNMRLSMKV (151 aa). N30 carries N-linked (GlcNAc...) asparagine glycosylation. Disulfide bonds link C55-C92 and C80-C162. Residues 173 to 196 are disordered; sequence VLSSQPTPSPSSKPARSRTDARRQ. Positions 175 to 186 are enriched in low complexity; the sequence is SSQPTPSPSSKP. Residue S335 is the site of GPI-anchor amidated serine attachment. Positions 336–354 are cleaved as a propeptide — removed in mature form; sequence SSSLPTFLIVFLIAVNLLF.

This sequence belongs to the ephrin family. Post-translationally, may undergo proteolysis by metalloprotease sup-17 to give rise to a soluble form.

The protein resides in the cell membrane. Functionally, regulates the formation or stabilization of cell-cell contacts at several stages of epithelial morphogenesis. In early embryonic development, involved in ventral closure of the epidermis. During male tail morphogenesis, regulates precursor cell sorting together with mab-20 and allows the formation of distinct sensory rays. Probably acts as a ligand for lad-2 to regulate axon guidance of several neurons including SDQL, SDQR, SMD and PLN neurons during neurogenesis. The protein is Ephrin-4 (efn-4) of Caenorhabditis briggsae.